The chain runs to 1190 residues: DNA-directed RNA polymerase subunit beta (1190 aa).

Belongs to the RNA polymerase beta chain family. In terms of assembly, the RNAP catalytic core consists of 2 alpha, 1 beta, 1 beta' and 1 omega subunit. When a sigma factor is associated with the core the holoenzyme is formed, which can initiate transcription.

It catalyses the reaction RNA(n) + a ribonucleoside 5'-triphosphate = RNA(n+1) + diphosphate. Its function is as follows. DNA-dependent RNA polymerase catalyzes the transcription of DNA into RNA using the four ribonucleoside triphosphates as substrates. The sequence is that of DNA-directed RNA polymerase subunit beta from Geobacillus thermodenitrificans (strain NG80-2).